The following is a 224-amino-acid chain: ATP-dependent dethiobiotin synthetase BioD (224 aa).

Thr-18 serves as a coordination point for Mg(2+). Lys-39 is a catalytic residue. Ser-43 contributes to the substrate binding site. Mg(2+) is bound by residues Asp-56 and Glu-117. ATP is bound by residues Asp-56, 117–120 (EGVG), and 177–178 (NE).

Belongs to the dethiobiotin synthetase family. Homodimer. Requires Mg(2+) as cofactor.

Its subcellular location is the cytoplasm. The enzyme catalyses (7R,8S)-7,8-diammoniononanoate + CO2 + ATP = (4R,5S)-dethiobiotin + ADP + phosphate + 3 H(+). Its pathway is cofactor biosynthesis; biotin biosynthesis; biotin from 7,8-diaminononanoate: step 1/2. Catalyzes a mechanistically unusual reaction, the ATP-dependent insertion of CO2 between the N7 and N8 nitrogen atoms of 7,8-diaminopelargonic acid (DAPA, also called 7,8-diammoniononanoate) to form a ureido ring. The polypeptide is ATP-dependent dethiobiotin synthetase BioD (Xanthomonas oryzae pv. oryzae (strain MAFF 311018)).